Consider the following 186-residue polypeptide: Acireductone dioxygenase (186 aa).

The disordered stretch occupies residues 1–21 (MSRLSIFPDGSTSMDQSSPTP). The segment covering 10–20 (GSTSMDQSSPT) has biased composition (polar residues). Fe(2+)-binding residues include His-103, His-105, Glu-109, and His-147. Residues His-103, His-105, Glu-109, and His-147 each contribute to the Ni(2+) site.

It belongs to the acireductone dioxygenase (ARD) family. As to quaternary structure, monomer. The cofactor is Fe(2+). Requires Ni(2+) as cofactor.

The catalysed reaction is 1,2-dihydroxy-5-(methylsulfanyl)pent-1-en-3-one + O2 = 3-(methylsulfanyl)propanoate + CO + formate + 2 H(+). The enzyme catalyses 1,2-dihydroxy-5-(methylsulfanyl)pent-1-en-3-one + O2 = 4-methylsulfanyl-2-oxobutanoate + formate + 2 H(+). It functions in the pathway amino-acid biosynthesis; L-methionine biosynthesis via salvage pathway; L-methionine from S-methyl-5-thio-alpha-D-ribose 1-phosphate: step 5/6. Functionally, catalyzes 2 different reactions between oxygen and the acireductone 1,2-dihydroxy-3-keto-5-methylthiopentene (DHK-MTPene) depending upon the metal bound in the active site. Fe-containing acireductone dioxygenase (Fe-ARD) produces formate and 2-keto-4-methylthiobutyrate (KMTB), the alpha-ketoacid precursor of methionine in the methionine recycle pathway. Ni-containing acireductone dioxygenase (Ni-ARD) produces methylthiopropionate, carbon monoxide and formate, and does not lie on the methionine recycle pathway. The protein is Acireductone dioxygenase of Synechococcus sp. (strain CC9902).